The primary structure comprises 346 residues: Elongation factor Ts (346 aa).

The involved in Mg(2+) ion dislocation from EF-Tu stretch occupies residues 80-83; sequence TDFV.

Belongs to the EF-Ts family.

It localises to the cytoplasm. Its function is as follows. Associates with the EF-Tu.GDP complex and induces the exchange of GDP to GTP. It remains bound to the aminoacyl-tRNA.EF-Tu.GTP complex up to the GTP hydrolysis stage on the ribosome. This chain is Elongation factor Ts (tsf), found in Streptococcus pneumoniae (strain ATCC BAA-255 / R6).